Consider the following 413-residue polypeptide: Ureide permease 5 (413 aa).

Residues 1 to 18 (MMIAQELGIYVVESKGGA) lie on the Extracellular side of the membrane. A helical membrane pass occupies residues 19–39 (ILCLLLSLLCLGTWPALMALL). The Cytoplasmic segment spans residues 40 to 50 (ERRGRLPQHTY). The chain crosses the membrane as a helical span at residues 51–71 (LDYSITNFLAAIFIAFVFGGI). Topologically, residues 72–91 (GESTHEAPSFITQLTQIQDN) are extracellular. The chain crosses the membrane as a helical span at residues 92–112 (WPSVLFAMAGGVGLSIGNLAT). Topologically, residues 113-115 (QYS) are cytoplasmic. Residues 116-136 (LAFVGLSVTEVTAASITVVVG) form a helical membrane-spanning segment. Topologically, residues 137–149 (TTVNYFLDNGLNR) are extracellular. The chain crosses the membrane as a helical span at residues 150–170 (ADILFSGVGCFMVAVCLGSAV). Over 171 to 240 (HSSNSADIKA…RAIKVLGKSM (70 aa)) the chain is Cytoplasmic. Position 232 to 239 (232 to 239 (AIKVLGKS)) interacts with ATP. The helical transmembrane segment at 241-261 (VVGLGITFFAGLSFSLFSPLF) threads the bilayer. The Extracellular portion of the chain corresponds to 262–278 (NLATNDQWHTLKQGVPK). A helical transmembrane segment spans residues 279-299 (LIVYTAFFYFSLSCFVIAVAL). Topologically, residues 300–326 (NISFLYKPVLDSPRSSFREYLSDWNGR) are cytoplasmic. Residues 327 to 347 (GWALAAGLLCGFGNGLQFMGG) form a helical membrane-spanning segment. Residues 348 to 352 (QAAGY) lie on the Extracellular side of the membrane. A helical transmembrane segment spans residues 353–373 (AASDAVQALPLVSTFWGIYLF). The Cytoplasmic segment spans residues 374-384 (GEYRRSSTRTY). A helical transmembrane segment spans residues 385–405 (ALLVGMLVMFTVAVGLLMASA). Residues 406–413 (GERETRFT) lie on the Extracellular side of the membrane.

This sequence belongs to the plant ureide permease (TC 2.A.7.19) family. In terms of tissue distribution, expressed in lateral roots, rosette leaves, stems, stipules, flower stigma, pedicels and the connective tissue between pollen sacks.

It is found in the membrane. Its function is as follows. Proton-coupled transporter that transports a wide spectrum of oxo derivatives of heterocyclic nitrogen compounds, including allantoin, uric acid and xanthine, but not adenine. Mediates transport of uracil and 5-fluorouracil (a toxic uracil analog). Proton-coupled transporter that transports a wide spectrum of oxo derivatives of heterocyclic nitrogen compounds, including allantoin, xanthine and uracil. The sequence is that of Ureide permease 5 from Arabidopsis thaliana (Mouse-ear cress).